The sequence spans 426 residues: MAATKPHINLAVIGHIDHGKSTLVGRLLFETGAVPAHIIEQYKKEAESKGKGTFEFAWVMDSLKEERERGITIDIAHRRFDTEKYYFTVVDCPGHRDFVKNMITGASQADAAILVCAAPDGVMQQTKEHIFLSKTLGINQLIIAVNKMDAINYDQKRYNEVKEEVSKILRMIGFKPDQIPFIPTSAFKGTNIAKHAEETPWYTGVTILEALNALKEPEKPTQLPLRVPIQDVYTISGIGLVPVGRVETGIMKKGDKVIFRPGIDGVGHAGEVKSIEMHHEEIPQALPGDNIGFNVRGIEKNLIRRGDVCGHVDKQPTVAVEFKAQVVVLQHPSAITAGYTPVFHCHTAQVACTLTQILATLDPKTGGVKEQNPPFIKTGDAAIVLIRPTRPLVIEKVKEIPQLGRFAIRDMGQTVAAGVVMDITPK.

One can recognise a tr-type G domain in the interval 5-221; it reads KPHINLAVIG…NALKEPEKPT (217 aa). The interval 14–21 is G1; sequence GHIDHGKS. A GTP-binding site is contributed by 14–21; that stretch reads GHIDHGKS. Ser-21 is a binding site for Mg(2+). Residues 70 to 74 form a G2 region; the sequence is GITID. The G3 stretch occupies residues 91–94; the sequence is DCPG. Residues 91–95 and 146–149 contribute to the GTP site; these read DCPGH and NKMD. The segment at 146 to 149 is G4; that stretch reads NKMD. The G5 stretch occupies residues 185-187; the sequence is SAF.

Belongs to the TRAFAC class translation factor GTPase superfamily. Classic translation factor GTPase family. EF-Tu/EF-1A subfamily.

The protein localises to the cytoplasm. It carries out the reaction GTP + H2O = GDP + phosphate + H(+). Its function is as follows. GTP hydrolase that promotes the GTP-dependent binding of aminoacyl-tRNA to the A-site of ribosomes during protein biosynthesis. This is Elongation factor 1-alpha from Methanocella arvoryzae (strain DSM 22066 / NBRC 105507 / MRE50).